The following is a 184-amino-acid chain: Regulatory protein RecX (184 aa).

The disordered stretch occupies residues 1-21 (MTLFPLPSTSDPAEADESTKR).

The protein belongs to the RecX family.

The protein resides in the cytoplasm. Modulates RecA activity. The protein is Regulatory protein RecX of Mycolicibacterium vanbaalenii (strain DSM 7251 / JCM 13017 / BCRC 16820 / KCTC 9966 / NRRL B-24157 / PYR-1) (Mycobacterium vanbaalenii).